A 321-amino-acid chain; its full sequence is Tyrosine recombinase XerC (321 aa).

The 92-residue stretch at 16–107 folds into the Core-binding (CB) domain; it reads SDIGQQIVRW…GLRSFARFLE (92 aa). The Tyr recombinase domain maps to 128–315; it reads SVPKPIHMSA…DSERLLDVYR (188 aa). Active-site residues include Arg173, Lys199, His267, Arg270, and His293. The active-site O-(3'-phospho-DNA)-tyrosine intermediate is Tyr302.

This sequence belongs to the 'phage' integrase family. XerC subfamily. Forms a cyclic heterotetrameric complex composed of two molecules of XerC and two molecules of XerD.

It localises to the cytoplasm. Functionally, site-specific tyrosine recombinase, which acts by catalyzing the cutting and rejoining of the recombining DNA molecules. The XerC-XerD complex is essential to convert dimers of the bacterial chromosome into monomers to permit their segregation at cell division. It also contributes to the segregational stability of plasmids. This is Tyrosine recombinase XerC from Nitrobacter winogradskyi (strain ATCC 25391 / DSM 10237 / CIP 104748 / NCIMB 11846 / Nb-255).